We begin with the raw amino-acid sequence, 219 residues long: uncharacterized protein (219 aa).

This is an uncharacterized protein from Methanocaldococcus jannaschii (strain ATCC 43067 / DSM 2661 / JAL-1 / JCM 10045 / NBRC 100440) (Methanococcus jannaschii).